The following is a 419-amino-acid chain: LanC-like protein 3 homolog (419 aa).

Belongs to the LanC-like protein family.

The polypeptide is LanC-like protein 3 homolog (Drosophila melanogaster (Fruit fly)).